The chain runs to 584 residues: Protein disulfide-isomerase-like protein of the testis (584 aa).

The first 20 residues, 1–20 (MDLLWMPLLLVAACVSAVHS), serve as a signal peptide directing secretion. Residues Asn58, Asn128, Asn160, and Asn340 are each glycosylated (N-linked (GlcNAc...) asparagine). One can recognise a Thioredoxin domain in the interval 388–451 (LVKQLVGKNF…IAKIDVTAND (64 aa)). Asn540 is a glycosylation site (N-linked (GlcNAc...) asparagine). The Prevents secretion from ER signature appears at 581–584 (KEEL).

The protein belongs to the protein disulfide isomerase family. As to quaternary structure, homodimer. The homodimer is not disulfide-linked. Interacts with ERO1A and CLGN. N-glycosylated. In terms of tissue distribution, testis-specific.

The protein localises to the endoplasmic reticulum. Functionally, probable redox-inactive chaperone involved in spermatogenesis. In Homo sapiens (Human), this protein is Protein disulfide-isomerase-like protein of the testis (PDILT).